The chain runs to 62 residues: Large ribosomal subunit protein bL32 (62 aa).

This sequence belongs to the bacterial ribosomal protein bL32 family.

The chain is Large ribosomal subunit protein bL32 from Treponema denticola (strain ATCC 35405 / DSM 14222 / CIP 103919 / JCM 8153 / KCTC 15104).